The following is a 28-amino-acid chain: Conotoxin de7b (28 aa).

3 disulfide bridges follow: C2–C18, C9–C22, and C17–C27. At P4 the chain carries 4-hydroxyproline; partial. The residue at position 7 (E7) is a 4-carboxyglutamate; partial. P14 is modified (4-hydroxyproline; partial).

In terms of tissue distribution, expressed by the venom duct.

It is found in the secreted. Functionally, may inhibit sodium (Nav) or calcium channels (Cav). This is Conotoxin de7b from Conasprella delessertii (Sozon's cone).